Consider the following 373-residue polypeptide: Sterol-4-alpha-carboxylate 3-dehydrogenase, decarboxylating (373 aa).

Met-1 carries the N-acetylmethionine modification. At Thr-22 the chain carries Phosphothreonine. The active-site Proton acceptor is Tyr-172. Position 176 (Lys-176) interacts with NAD(+). Residues 298-318 (WVAYYLALLLSLLVMVISPVI) form a helical membrane-spanning segment. The short motif at 370 to 373 (RRVK) is the Prevents secretion from ER element.

It belongs to the 3-beta-HSD family. In terms of assembly, homodimer. In terms of tissue distribution, brain, heart, liver, lung, kidney, skin and placenta.

The protein localises to the endoplasmic reticulum membrane. It is found in the lipid droplet. The enzyme catalyses a 3beta-hydroxysteroid-4alpha-carboxylate + NADP(+) = a 3-oxosteroid + CO2 + NADPH. It catalyses the reaction a 3beta-hydroxysteroid-4alpha-carboxylate + NAD(+) = a 3-oxosteroid + CO2 + NADH. It carries out the reaction 4alpha-carboxyzymosterol + NADP(+) = zymosterone + CO2 + NADPH. The catalysed reaction is 4alpha-carboxy-4beta-methyl-5alpha-cholest-8-en-3beta-ol + NADP(+) = 4alpha-methyl-5alpha-cholest-8-en-3-one + CO2 + NADPH. The enzyme catalyses 4alpha-carboxy-5alpha-cholest-8-ene-3beta-ol + NADP(+) = 5alpha-cholest-8-en-3-one + CO2 + NADPH. It catalyses the reaction 4beta-methylzymosterol-4alpha-carboxylate + NADP(+) = 3-dehydro-4-methylzymosterol + CO2 + NADPH. It carries out the reaction 4beta-methylzymosterol-4alpha-carboxylate + NAD(+) = 3-dehydro-4-methylzymosterol + CO2 + NADH. The catalysed reaction is 4alpha-carboxy-5alpha-cholest-8-ene-3beta-ol + NAD(+) = 5alpha-cholest-8-en-3-one + CO2 + NADH. The enzyme catalyses 4alpha-carboxy-4beta-methyl-5alpha-cholest-8-en-3beta-ol + NAD(+) = 4alpha-methyl-5alpha-cholest-8-en-3-one + CO2 + NADH. It catalyses the reaction 4alpha-carboxyzymosterol + NAD(+) = zymosterone + CO2 + NADH. The protein operates within steroid biosynthesis; zymosterol biosynthesis; zymosterol from lanosterol: step 4/6. In terms of biological role, catalyzes the NAD(P)(+)-dependent oxidative decarboxylation of the C4 methyl groups of 4-alpha-carboxysterols in post-squalene cholesterol biosynthesis. Also plays a role in the regulation of the endocytic trafficking of EGFR. In Homo sapiens (Human), this protein is Sterol-4-alpha-carboxylate 3-dehydrogenase, decarboxylating (NSDHL).